A 465-amino-acid chain; its full sequence is Cysteine--tRNA ligase (465 aa).

Cysteine 30 contacts Zn(2+). The short motif at 32-42 is the 'HIGH' region element; that stretch reads ITVYDYCHVGH. Residues cysteine 214, histidine 239, and glutamate 243 each coordinate Zn(2+). The 'KMSKS' region signature appears at 271 to 275; it reads KMSKS. Position 274 (lysine 274) interacts with ATP.

It belongs to the class-I aminoacyl-tRNA synthetase family. As to quaternary structure, monomer. Zn(2+) is required as a cofactor.

It is found in the cytoplasm. The enzyme catalyses tRNA(Cys) + L-cysteine + ATP = L-cysteinyl-tRNA(Cys) + AMP + diphosphate. The polypeptide is Cysteine--tRNA ligase (Burkholderia cenocepacia (strain ATCC BAA-245 / DSM 16553 / LMG 16656 / NCTC 13227 / J2315 / CF5610) (Burkholderia cepacia (strain J2315))).